Reading from the N-terminus, the 436-residue chain is Putative ankyrin repeat protein FPV026 (436 aa).

6 ANK repeats span residues 63-92, 101-130, 135-164, 168-197, 201-230, and 234-266; these read EGIR…NVNE, TCYS…DVNN, LRNT…DQNI, NGNI…NLEI, NGRT…LVDS, and EGYT…FLNI. The 28-residue stretch at 409–436 folds into the F-box domain; sequence TSTITNLPYEVIYIIVEKMTNKELCEIR.

The chain is Putative ankyrin repeat protein FPV026 from Fowlpox virus (strain NVSL) (FPV).